Here is a 320-residue protein sequence, read N- to C-terminus: Small ribosomal subunit protein uS15m (320 aa).

Disordered stretches follow at residues 37-60 (NISQ…AQQR) and 214-242 (QSLE…DTGS).

Belongs to the universal ribosomal protein uS15 family. In terms of assembly, component of the mitochondrial small ribosomal subunit (mt-SSU). Mature N.crassa 74S mitochondrial ribosomes consist of a small (37S) and a large (54S) subunit. The 37S small subunit contains a 16S ribosomal RNA (16S mt-rRNA) and 32 different proteins. The 54S large subunit contains a 23S rRNA (23S mt-rRNA) and 42 different proteins.

It localises to the mitochondrion. Component of the mitochondrial ribosome (mitoribosome), a dedicated translation machinery responsible for the synthesis of mitochondrial genome-encoded proteins, including at least some of the essential transmembrane subunits of the mitochondrial respiratory chain. The mitoribosomes are attached to the mitochondrial inner membrane and translation products are cotranslationally integrated into the membrane. In Neurospora crassa (strain ATCC 24698 / 74-OR23-1A / CBS 708.71 / DSM 1257 / FGSC 987), this protein is Small ribosomal subunit protein uS15m (mrps28).